The chain runs to 193 residues: Putative manganese efflux pump MntP (193 aa).

Transmembrane regions (helical) follow at residues 6–26, 48–68, 71–91, 108–128, 132–152, and 165–185; these read VIFI…GIAC, AGMV…ISAF, WIAF…ALQG, LLGV…AFAV, NIGL…FLGF, and WVGV…LAEH.

This sequence belongs to the MntP (TC 9.B.29) family.

Its subcellular location is the cell membrane. In terms of biological role, probably functions as a manganese efflux pump. This chain is Putative manganese efflux pump MntP, found in Dehalococcoides mccartyi (strain ATCC BAA-2100 / JCM 16839 / KCTC 5957 / BAV1).